Here is a 316-residue protein sequence, read N- to C-terminus: Thymidylate synthase (316 aa).

DUMP is bound by residues Arg23 and 178–179 (RR). The active-site Nucleophile is Cys198. Residues 218–221 (RSGD), Asn229, and 259–261 (HIY) each bind dUMP. A (6R)-5,10-methylene-5,6,7,8-tetrahydrofolate-binding site is contributed by Asp221. Ala315 is a binding site for (6R)-5,10-methylene-5,6,7,8-tetrahydrofolate.

The protein belongs to the thymidylate synthase family. Bacterial-type ThyA subfamily. In terms of assembly, homodimer.

The protein localises to the cytoplasm. It catalyses the reaction dUMP + (6R)-5,10-methylene-5,6,7,8-tetrahydrofolate = 7,8-dihydrofolate + dTMP. Its pathway is pyrimidine metabolism; dTTP biosynthesis. In terms of biological role, catalyzes the reductive methylation of 2'-deoxyuridine-5'-monophosphate (dUMP) to 2'-deoxythymidine-5'-monophosphate (dTMP) while utilizing 5,10-methylenetetrahydrofolate (mTHF) as the methyl donor and reductant in the reaction, yielding dihydrofolate (DHF) as a by-product. This enzymatic reaction provides an intracellular de novo source of dTMP, an essential precursor for DNA biosynthesis. The sequence is that of Thymidylate synthase from Pediococcus pentosaceus (strain ATCC 25745 / CCUG 21536 / LMG 10740 / 183-1w).